We begin with the raw amino-acid sequence, 118 residues long: Basic phospholipase A2 homolog 1 (118 aa).

7 disulfides stabilise this stretch: Cys11-Cys71, Cys27-Cys117, Cys29-Cys45, Cys44-Cys98, Cys51-Cys91, Cys60-Cys84, and Cys78-Cys89. The segment at 106-118 is important for membrane-damaging activities in eukaryotes and bacteria; heparin-binding; the sequence is NKNFNIDTKKRCK.

Belongs to the phospholipase A2 family. Group I subfamily. D49 sub-subfamily. As to expression, expressed by the venom gland.

It is found in the secreted. This Laticauda colubrina (Yellow-lipped sea krait) protein is Basic phospholipase A2 homolog 1.